Consider the following 162-residue polypeptide: Phosphopantetheine adenylyltransferase (162 aa).

Serine 9 serves as a coordination point for substrate. Residues 9 to 10 (SF) and histidine 17 each bind ATP. Substrate contacts are provided by lysine 41, valine 77, and lysine 91. Residues 92-94 (GLR), glutamate 102, and 126-132 (YAFLSSS) each bind ATP.

It belongs to the bacterial CoaD family. As to quaternary structure, homohexamer. Mg(2+) is required as a cofactor.

The protein resides in the cytoplasm. The catalysed reaction is (R)-4'-phosphopantetheine + ATP + H(+) = 3'-dephospho-CoA + diphosphate. The protein operates within cofactor biosynthesis; coenzyme A biosynthesis; CoA from (R)-pantothenate: step 4/5. Reversibly transfers an adenylyl group from ATP to 4'-phosphopantetheine, yielding dephospho-CoA (dPCoA) and pyrophosphate. The sequence is that of Phosphopantetheine adenylyltransferase from Frankia alni (strain DSM 45986 / CECT 9034 / ACN14a).